The following is a 126-amino-acid chain: Regulatory protein MgsR (126 aa).

An intrachain disulfide couples cysteine 13 to cysteine 16.

Belongs to the ArsC family.

The protein localises to the cytoplasm. With respect to regulation, activity is controlled at multiple levels. Regulation includes a positive autoregulatory loop on mgsR transcription and a post-translational redox-sensitive activation step by an intramolecular disulfide bond formation in response to ethanol stress. In addition, protein stability is strictly controlled by rapid proteolytic degradation by the ClpXP and ClpCP proteases. The McsB protein-arginine kinase might serve as a proteolytic adapter for the ClpX ATPase in the degradation mechanism of MgsR. In terms of biological role, regulates transcription of a subregulon within the general stress response. Exerts positive and negative effects in response to ethanol stress. In Bacillus subtilis (strain 168), this protein is Regulatory protein MgsR.